Reading from the N-terminus, the 101-residue chain is Protein Tat (101 aa).

An interaction with human CREBBP region spans residues 1-24; it reads MEPVDPRLEPWKHPGSQPKTACTN. Residues 1 to 48 are transactivation; sequence MEPVDPRLEPWKHPGSQPKTACTNCYCKKCCFHCQVCFTKKALGISYG. Positions 22, 25, and 27 each coordinate Zn(2+). Positions 22–37 are cysteine-rich; sequence CTNCYCKKCCFHCQVC. Lysine 28 carries the N6-acetyllysine; by host PCAF modification. Zn(2+)-binding residues include cysteine 30, histidine 33, cysteine 34, and cysteine 37. The core stretch occupies residues 38–48; that stretch reads FTKKALGISYG. Residues 47 to 101 are disordered; that stretch reads YGRKKRRQRRRAHQDSQNHQASLSKQPSSQTRGDPTGPKEPKKEVEREAETDPLD. The span at 48 to 58 shows a compositional bias: basic residues; sequence GRKKRRQRRRA. A Nuclear localization signal, RNA-binding (TAR), and protein transduction motif is present at residues 49-57; sequence RKKRRQRRR. Residues 49–86 are interaction with the host capping enzyme RNGTT; that stretch reads RKKRRQRRRAHQDSQNHQASLSKQPSSQTRGDPTGPKE. N6-acetyllysine; by host EP300 and GCN5L2 is present on residues lysine 50 and lysine 51. 2 positions are modified to asymmetric dimethylarginine; by host PRMT6: arginine 52 and arginine 53. Residues 61–79 show a composition bias toward polar residues; sequence DSQNHQASLSKQPSSQTRG. Lysine 71 participates in a covalent cross-link: Glycyl lysine isopeptide (Lys-Gly) (interchain with G-Cter in ubiquitin). The Cell attachment site motif lies at 78 to 80; it reads RGD. The segment covering 83–101 has biased composition (basic and acidic residues); it reads GPKEPKKEVEREAETDPLD.

The protein belongs to the lentiviruses Tat family. Interacts with host CCNT1. Associates with the P-TEFb complex composed at least of Tat, P-TEFb (CDK9 and CCNT1), TAR RNA, RNA Pol II. Recruits the HATs CREBBP, TAF1/TFIID, EP300, PCAF and GCN5L2. Interacts with host KAT5/Tip60; this interaction targets the latter to degradation. Interacts with the host deacetylase SIRT1. Interacts with host capping enzyme RNGTT; this interaction stimulates RNGTT. Binds to host KDR, and to the host integrins ITGAV/ITGB3 and ITGA5/ITGB1. Interacts with host KPNB1/importin beta-1 without previous binding to KPNA1/importin alpha-1. Interacts with EIF2AK2. Interacts with host nucleosome assembly protein NAP1L1; this interaction may be required for the transport of Tat within the nucleus, since the two proteins interact at the nuclear rim. Interacts with host C1QBP/SF2P32; this interaction involves lysine-acetylated Tat. Interacts with the host chemokine receptors CCR2, CCR3 and CXCR4. Interacts with host DPP4/CD26; this interaction may trigger an anti-proliferative effect. Interacts with host LDLR. Interacts with the host extracellular matrix metalloproteinase MMP1. Interacts with host PRMT6; this interaction mediates Tat's methylation. Interacts with, and is ubiquitinated by MDM2/Hdm2. Interacts with host PSMC3 and HTATIP2. Interacts with STAB1; this interaction may overcome SATB1-mediated repression of IL2 and IL2RA (interleukin) in T cells by binding to the same domain than HDAC1. Interacts (when acetylated) with human CDK13, thereby increasing HIV-1 mRNA splicing and promoting the production of the doubly spliced HIV-1 protein Nef. Interacts with host TBP; this interaction modulates the activity of transcriptional pre-initiation complex. Interacts with host RELA. Interacts with host PLSCR1; this interaction negatively regulates Tat transactivation activity by altering its subcellular distribution. In terms of processing, asymmetrical arginine methylation by host PRMT6 seems to diminish the transactivation capacity of Tat and affects the interaction with host CCNT1. Acetylation by EP300, CREBBP, GCN5L2/GCN5 and PCAF regulates the transactivation activity of Tat. EP300-mediated acetylation of Lys-50 promotes dissociation of Tat from the TAR RNA through the competitive binding to PCAF's bromodomain. In addition, the non-acetylated Tat's N-terminus can also interact with PCAF. PCAF-mediated acetylation of Lys-28 enhances Tat's binding to CCNT1. Lys-50 is deacetylated by SIRT1. Post-translationally, polyubiquitination by host MDM2 does not target Tat to degradation, but activates its transactivation function and fosters interaction with CCNT1 and TAR RNA. In terms of processing, phosphorylated by EIF2AK2 on serine and threonine residues adjacent to the basic region important for TAR RNA binding and function. Phosphorylation of Tat by EIF2AK2 is dependent on the prior activation of EIF2AK2 by dsRNA.

The protein resides in the host nucleus. It is found in the host nucleolus. It localises to the host cytoplasm. Its subcellular location is the secreted. Its function is as follows. Transcriptional activator that increases RNA Pol II processivity, thereby increasing the level of full-length viral transcripts. Recognizes a hairpin structure at the 5'-LTR of the nascent viral mRNAs referred to as the transactivation responsive RNA element (TAR) and recruits the cyclin T1-CDK9 complex (P-TEFb complex) that will in turn hyperphosphorylate the RNA polymerase II to allow efficient elongation. The CDK9 component of P-TEFb and other Tat-activated kinases hyperphosphorylate the C-terminus of RNA Pol II that becomes stabilized and much more processive. Other factors such as HTATSF1/Tat-SF1, SUPT5H/SPT5, and HTATIP2 are also important for Tat's function. Besides its effect on RNA Pol II processivity, Tat induces chromatin remodeling of proviral genes by recruiting the histone acetyltransferases (HATs) CREBBP, EP300 and PCAF to the chromatin. This also contributes to the increase in proviral transcription rate, especially when the provirus integrates in transcriptionally silent region of the host genome. To ensure maximal activation of the LTR, Tat mediates nuclear translocation of NF-kappa-B by interacting with host RELA. Through its interaction with host TBP, Tat may also modulate transcription initiation. Tat can reactivate a latently infected cell by penetrating in it and transactivating its LTR promoter. In the cytoplasm, Tat is thought to act as a translational activator of HIV-1 mRNAs. Functionally, extracellular circulating Tat can be endocytosed by surrounding uninfected cells via the binding to several surface receptors such as CD26, CXCR4, heparan sulfate proteoglycans (HSPG) or LDLR. Neurons are rarely infected, but they internalize Tat via their LDLR. Through its interaction with nuclear HATs, Tat is potentially able to control the acetylation-dependent cellular gene expression. Modulates the expression of many cellular genes involved in cell survival, proliferation or in coding for cytokines or cytokine receptors. Tat plays a role in T-cell and neurons apoptosis. Tat induced neurotoxicity and apoptosis probably contribute to neuroAIDS. Circulating Tat also acts as a chemokine-like and/or growth factor-like molecule that binds to specific receptors on the surface of the cells, affecting many cellular pathways. In the vascular system, Tat binds to ITGAV/ITGB3 and ITGA5/ITGB1 integrins dimers at the surface of endothelial cells and competes with bFGF for heparin-binding sites, leading to an excess of soluble bFGF. This is Protein Tat from Homo sapiens (Human).